Here is a 420-residue protein sequence, read N- to C-terminus: Tubulin-specific chaperone C (420 aa).

Residues 9–142 (NNNNDEENSK…QIDKSKEKYM (134 aa)) adopt a coiled-coil conformation. Residues 31–49 (KQRLQSKLEKREISNKEQI) are compositionally biased toward basic and acidic residues. Disordered stretches follow at residues 31–52 (KQRLQSKLEKREISNKEQIDQS), 138–193 (KEKY…NNNK), and 222–257 (EIGNQDINNNNNNNNNNNNNNNNNNNNNNNNNNNNN). Composition is skewed to low complexity over residues 172–192 (ETFNNNNNNNNDNDNTDNNNN) and 228–257 (INNNNNNNNNNNNNNNNNNNNNNNNNNNNN). In terms of domain architecture, C-CAP/cofactor C-like spans 216-366 (PPKKEEEIGN…LKQQQQQQQQ (151 aa)).

Belongs to the TBCC family. As to quaternary structure, supercomplex made of cofactors A to E. Cofactors A and D function by capturing and stabilizing tubulin in a quasi-native conformation. Cofactor E binds to the cofactor D-tubulin complex; interaction with cofactor C then causes the release of tubulin polypeptides that are committed to the native state.

Its function is as follows. Tubulin-folding protein; involved in the final step of the tubulin folding pathway. The protein is Tubulin-specific chaperone C (tbcc) of Dictyostelium discoideum (Social amoeba).